The following is a 130-amino-acid chain: Large ribosomal subunit protein bL12 (130 aa).

The protein belongs to the bacterial ribosomal protein bL12 family. Homodimer. Part of the ribosomal stalk of the 50S ribosomal subunit. Forms a multimeric L10(L12)X complex, where L10 forms an elongated spine to which 2 to 4 L12 dimers bind in a sequential fashion. Binds GTP-bound translation factors.

In terms of biological role, forms part of the ribosomal stalk which helps the ribosome interact with GTP-bound translation factors. Is thus essential for accurate translation. The polypeptide is Large ribosomal subunit protein bL12 (Nostoc punctiforme (strain ATCC 29133 / PCC 73102)).